The sequence spans 162 residues: Phycoerythrocyanin alpha chain (162 aa).

Cysteine 84 contacts (15Z)-phycoviolobilin.

The protein belongs to the phycobiliprotein family. As to quaternary structure, heterodimer of an alpha and a beta chain. Post-translationally, contains one covalently linked bilin chromophore.

The protein localises to the cellular thylakoid membrane. Light-harvesting photosynthetic bile pigment-protein from the phycobiliprotein complex. This chain is Phycoerythrocyanin alpha chain (pecA), found in Nostoc sp. (strain PCC 7120 / SAG 25.82 / UTEX 2576).